The sequence spans 342 residues: 4-hydroxy-2-oxovalerate aldolase (342 aa).

Residues 7–259 form the Pyruvate carboxyltransferase domain; that stretch reads ILVHDMSLRD…CTGVDLGRIQ (253 aa). 15–16 serves as a coordination point for substrate; sequence RD. Mn(2+) is bound at residue Asp-16. His-19 acts as the Proton acceptor in catalysis. Residues Ser-169 and His-198 each contribute to the substrate site. Residues His-198 and His-200 each coordinate Mn(2+). Tyr-289 contacts substrate.

It belongs to the 4-hydroxy-2-oxovalerate aldolase family.

The catalysed reaction is (S)-4-hydroxy-2-oxopentanoate = acetaldehyde + pyruvate. In Alkalilimnicola ehrlichii (strain ATCC BAA-1101 / DSM 17681 / MLHE-1), this protein is 4-hydroxy-2-oxovalerate aldolase.